We begin with the raw amino-acid sequence, 128 residues long: Small ribosomal subunit protein uS12 (128 aa).

Residues 1-30 are disordered; that stretch reads MPTINQLIRKGREPKERKSKSPALMGNPQK. D89 is modified (3-methylthioaspartic acid). The disordered stretch occupies residues 106–128; the sequence is GVEGRKQGRSKYGTKRPKEGGKK.

The protein belongs to the universal ribosomal protein uS12 family. In terms of assembly, part of the 30S ribosomal subunit. Contacts proteins S8 and S17. May interact with IF1 in the 30S initiation complex.

With S4 and S5 plays an important role in translational accuracy. In terms of biological role, interacts with and stabilizes bases of the 16S rRNA that are involved in tRNA selection in the A site and with the mRNA backbone. Located at the interface of the 30S and 50S subunits, it traverses the body of the 30S subunit contacting proteins on the other side and probably holding the rRNA structure together. The combined cluster of proteins S8, S12 and S17 appears to hold together the shoulder and platform of the 30S subunit. The chain is Small ribosomal subunit protein uS12 from Dictyoglomus thermophilum (strain ATCC 35947 / DSM 3960 / H-6-12).